Consider the following 368-residue polypeptide: Germination protease (368 aa).

A propeptide spanning residues 1 to 15 (MKEPLDLSKYSVRTD) is cleaved from the precursor.

The protein belongs to the peptidase A25 family. As to quaternary structure, homotetramer. Autoproteolytically processed. The inactive tetrameric zymogen termed p46 autoprocesses to a smaller form termed p41, which is active only during spore germination.

The catalysed reaction is Endopeptidase action with P4 Glu or Asp, P1 preferably Glu &gt; Asp, P1' hydrophobic and P2' Ala.. Its function is as follows. Initiates the rapid degradation of small, acid-soluble proteins during spore germination. In Bacillus anthracis (strain A0248), this protein is Germination protease.